Reading from the N-terminus, the 234-residue chain is Demethylmenaquinone methyltransferase (234 aa).

Residues Thr62, Asp80, 100–101 (DA), and Ser117 contribute to the S-adenosyl-L-methionine site.

The protein belongs to the class I-like SAM-binding methyltransferase superfamily. MenG/UbiE family.

It catalyses the reaction a 2-demethylmenaquinol + S-adenosyl-L-methionine = a menaquinol + S-adenosyl-L-homocysteine + H(+). It participates in quinol/quinone metabolism; menaquinone biosynthesis; menaquinol from 1,4-dihydroxy-2-naphthoate: step 2/2. Its function is as follows. Methyltransferase required for the conversion of demethylmenaquinol (DMKH2) to menaquinol (MKH2). This chain is Demethylmenaquinone methyltransferase, found in Mycobacterium bovis (strain ATCC BAA-935 / AF2122/97).